The following is a 248-amino-acid chain: 23S rRNA (guanosine-2'-O-)-methyltransferase RlmB (248 aa).

Glycine 198, leucine 218, and leucine 227 together coordinate S-adenosyl-L-methionine.

This sequence belongs to the class IV-like SAM-binding methyltransferase superfamily. RNA methyltransferase TrmH family. RlmB subfamily.

The protein resides in the cytoplasm. It catalyses the reaction guanosine(2251) in 23S rRNA + S-adenosyl-L-methionine = 2'-O-methylguanosine(2251) in 23S rRNA + S-adenosyl-L-homocysteine + H(+). Its function is as follows. Specifically methylates the ribose of guanosine 2251 in 23S rRNA. The protein is 23S rRNA (guanosine-2'-O-)-methyltransferase RlmB of Pseudomonas putida (strain ATCC 47054 / DSM 6125 / CFBP 8728 / NCIMB 11950 / KT2440).